Consider the following 166-residue polypeptide: NADH-quinone oxidoreductase subunit I (166 aa).

2 4Fe-4S ferredoxin-type domains span residues 57 to 87 and 97 to 126; these read LRRY…IESE and TRYD…VTPI. Residues C67, C70, C73, C77, C106, C109, C112, and C116 each contribute to the [4Fe-4S] cluster site.

This sequence belongs to the complex I 23 kDa subunit family. NDH-1 is composed of 14 different subunits. Subunits NuoA, H, J, K, L, M, N constitute the membrane sector of the complex. It depends on [4Fe-4S] cluster as a cofactor.

It is found in the cell inner membrane. It carries out the reaction a quinone + NADH + 5 H(+)(in) = a quinol + NAD(+) + 4 H(+)(out). In terms of biological role, NDH-1 shuttles electrons from NADH, via FMN and iron-sulfur (Fe-S) centers, to quinones in the respiratory chain. The immediate electron acceptor for the enzyme in this species is believed to be ubiquinone. Couples the redox reaction to proton translocation (for every two electrons transferred, four hydrogen ions are translocated across the cytoplasmic membrane), and thus conserves the redox energy in a proton gradient. The sequence is that of NADH-quinone oxidoreductase subunit I from Legionella pneumophila (strain Paris).